A 466-amino-acid chain; its full sequence is MTVRLRFAPSPTGYLHVGGARTALFNWLYARKMNGKFVLRIEDTDLQRSTKESEKAIIESLKWCGIDWDEGPDIGGDFGPYRQSERVSEGIYKRYAQILVEKQCAYYTVYDKVDRKKVLFNTFEYPEEYEKKGHDITISFRVPEGITKFHDLLKGNMEFQNSVIGDFVIVKSDGFPTYNFAVVIDDYLMRITHVFRGEDHLSNTPKQIMIYKALGWEIPQFMHIPLILGFDRTPLSKRHGATSVEHFRKIGILNMGLMNYLALLGWSVGEEEVFDVKEKLVNFEPESISNKGVIFDPEKLEWVNGKHMRMINIEQLWNEFVEWIKFTNRKIPHCEESYALKVLNVCREKVNTLSQLYDFSYSFFFDDYTLEERFVSEYLSTSYAKEILRKAVVLFSELKDWSIEGTEKVCRALADMKIASKNKVFQLLRGAVTGKLVTPGLFETLSILGKKRVIERFEKLLNSVDC.

Residues 9 to 19 carry the 'HIGH' region motif; the sequence is PSPTGYLHVGG. The 'KMSKS' region signature appears at 234-238; it reads PLSKR. Position 237 (lysine 237) interacts with ATP.

This sequence belongs to the class-I aminoacyl-tRNA synthetase family. Glutamate--tRNA ligase type 1 subfamily. In terms of assembly, monomer.

The protein resides in the cytoplasm. It carries out the reaction tRNA(Glu) + L-glutamate + ATP = L-glutamyl-tRNA(Glu) + AMP + diphosphate. In terms of biological role, catalyzes the attachment of glutamate to tRNA(Glu) in a two-step reaction: glutamate is first activated by ATP to form Glu-AMP and then transferred to the acceptor end of tRNA(Glu). This Pseudothermotoga lettingae (strain ATCC BAA-301 / DSM 14385 / NBRC 107922 / TMO) (Thermotoga lettingae) protein is Glutamate--tRNA ligase 2.